The following is a 159-amino-acid chain: MNIRIGHGFDVHKFGGDSPLLLGGVNVPYETGLIAHSDGDVVLHAISDAVLGAVALGDIGKHFPDTDDDFKGADSRHLLRHCYQLAKDKGFVIGNLDVTIIAQVPKMAPHIQAIREVLSRDFATDLDNINVKATTTEKLGFTGRKEGIAVEAVILLAKA.

Residues Asp10 and His12 each coordinate a divalent metal cation. 4-CDP-2-C-methyl-D-erythritol 2-phosphate contacts are provided by residues 10–12 (DVH) and 36–37 (HS). His44 serves as a coordination point for a divalent metal cation. 4-CDP-2-C-methyl-D-erythritol 2-phosphate is bound by residues 58–60 (DIG), 63–67 (FPDTD), 102–108 (AQVPKMA), 134–137 (TTTE), Phe141, and Arg144.

The protein belongs to the IspF family. In terms of assembly, homotrimer. It depends on a divalent metal cation as a cofactor.

The catalysed reaction is 4-CDP-2-C-methyl-D-erythritol 2-phosphate = 2-C-methyl-D-erythritol 2,4-cyclic diphosphate + CMP. It functions in the pathway isoprenoid biosynthesis; isopentenyl diphosphate biosynthesis via DXP pathway; isopentenyl diphosphate from 1-deoxy-D-xylulose 5-phosphate: step 4/6. Its function is as follows. Involved in the biosynthesis of isopentenyl diphosphate (IPP) and dimethylallyl diphosphate (DMAPP), two major building blocks of isoprenoid compounds. Catalyzes the conversion of 4-diphosphocytidyl-2-C-methyl-D-erythritol 2-phosphate (CDP-ME2P) to 2-C-methyl-D-erythritol 2,4-cyclodiphosphate (ME-CPP) with a corresponding release of cytidine 5-monophosphate (CMP). This is 2-C-methyl-D-erythritol 2,4-cyclodiphosphate synthase from Shewanella woodyi (strain ATCC 51908 / MS32).